The primary structure comprises 568 residues: Protein downstream neighbor of son homolog (568 aa).

Disordered stretches follow at residues 28–48 (NKLA…QVDE) and 311–355 (MPLK…DDDE). Residues 315–335 (SDNSGNAHDNSFNEESTTTSL) are compositionally biased toward polar residues.

The protein belongs to the DONSON family. As to expression, expression peaks during late G1 and S phase (at protein level).

It is found in the nucleus. In terms of biological role, essential for DNA amplification in the ovary and required for cell proliferation during development. This is Protein downstream neighbor of son homolog (hd) from Drosophila melanogaster (Fruit fly).